The sequence spans 332 residues: Adenosine receptor A2b (332 aa).

Topologically, residues 1 to 8 (MQLETQDA) are extracellular. A helical transmembrane segment spans residues 9 to 33 (LYVALELAIAALSVAGNVLVCAAVG). Topologically, residues 34–43 (TSSALQTPTN) are cytoplasmic. Residues 44–67 (YFLVSLAAADVAVGLFAIPFAITI) traverse the membrane as a helical segment. Residues 68-78 (SLGFCTDFHSC) lie on the Extracellular side of the membrane. A disulfide bond links Cys-78 and Cys-170. The helical transmembrane segment at 79 to 101 (LFLACFVLVLTQSSIFSLLAVAV) threads the bilayer. Over 102 to 121 (DRYLAIRVPLRYKSLVTGTR) the chain is Cytoplasmic. A helical transmembrane segment spans residues 122–144 (ARGVIAVLWVLAFGIGLTPFLGW). Over 145–177 (NSKDSATNCTEPWDGTTNESCCLVKCLFENVVP) the chain is Extracellular. Residues Asn-152 and Asn-162 are each glycosylated (N-linked (GlcNAc...) asparagine). An adenosine-binding site is contributed by Glu-173. The helical transmembrane segment at 178–202 (MSYMVYFNFFGCVLPPLLIMLVIYI) threads the bilayer. The Cytoplasmic portion of the chain corresponds to 203–234 (KIFMVACKQLQRTELVDHSRTVIQREIHAAKS). Residues 235 to 258 (LAMIVGIFALCWLPVHAINCVTLF) form a helical membrane-spanning segment. Asn-253 provides a ligand contact to adenosine. Residues 259–266 (QPARAKDK) are Extracellular-facing. The chain crosses the membrane as a helical span at residues 267 to 290 (PKWAMNMAILLSHASSVVNPIVYA). Residues Ser-278 and His-279 each contribute to the adenosine site. At 291–332 (YRNRDFRYTFHKIISRYVLCQTDVLKSGNGQAGTQSALDVGL) the chain is on the cytoplasmic side. Cys-310 is lipidated: S-palmitoyl cysteine.

Belongs to the G-protein coupled receptor 1 family.

It localises to the cell membrane. In terms of biological role, receptor for adenosine. The activity of this receptor is mediated by G proteins which activate adenylyl cyclase. The chain is Adenosine receptor A2b (ADORA2B) from Canis lupus familiaris (Dog).